A 548-amino-acid polypeptide reads, in one-letter code: Isocitrate dehydrogenase [NAD(+)] 1, mitochondrial (548 aa).

A mitochondrion-targeting transit peptide spans 1-53; it reads MSSLSTLRILHSTAGRRWASYYGIYPKSAACSSSSVAIARFFSTAADRPPKHA. NAD(+)-binding positions include 132–134 and N153; that span reads TIT. Residues 151-157, R187, Y194, K266, D311, and D335 each bind D-threo-isocitrate; that span reads SPNGAMR. Residues D311, D335, and D339 each coordinate Mg(2+). Residues 372-377 and N391 contribute to the NAD(+) site; that span reads HGTVSD. Positions 499–534 constitute an EF-hand domain; it reads IDEEAINGLFQKYDKNGDGFIDFEEFTRMLVKMNLA. Ca(2+) contacts are provided by D512, N514, D516, F518, and E523.

This sequence belongs to the isocitrate and isopropylmalate dehydrogenases family. In terms of assembly, homodimer. Mg(2+) is required as a cofactor. Requires Mn(2+) as cofactor.

The protein resides in the mitochondrion. The catalysed reaction is D-threo-isocitrate + NAD(+) = 2-oxoglutarate + CO2 + NADH. Its activity is regulated as follows. The homodimer exhibits allosteric regulation by isocitrate. Activated by Mn(2+) and Mg(2+). No activation by Na(+), K(+) or Li(+). Inhibited by Co(2+), Cu(2+) and Ni(2+), but not with Ca(2+) in the presence of Mn(2+) or Mg(2+). Competitively inhibited by NADH, but no effect on activity by 1.0 mM citrate. Strongly inhibited by excess ATP, ADP, AMP and alpha-ketoglutarate. Performs an essential role in the oxidative function of the tricarboxylic acid cycle and respiration. Catalyzes the decarboxylation of isocitrate to produce 2-oxoglutarate and generate NADH to provide electrons for energy production. No activity with NADP(+). This chain is Isocitrate dehydrogenase [NAD(+)] 1, mitochondrial, found in Phaeodactylum tricornutum (strain CCAP 1055/1).